The chain runs to 319 residues: Aspartate carbamoyltransferase catalytic subunit (319 aa).

2 residues coordinate carbamoyl phosphate: R57 and T58. K85 is an L-aspartate binding site. Residues R107, H140, and Q143 each coordinate carbamoyl phosphate. The L-aspartate site is built by R173 and R227. Residues G268 and P269 each contribute to the carbamoyl phosphate site.

This sequence belongs to the aspartate/ornithine carbamoyltransferase superfamily. ATCase family. In terms of assembly, heterododecamer (2C3:3R2) of six catalytic PyrB chains organized as two trimers (C3), and six regulatory PyrI chains organized as three dimers (R2).

The enzyme catalyses carbamoyl phosphate + L-aspartate = N-carbamoyl-L-aspartate + phosphate + H(+). The protein operates within pyrimidine metabolism; UMP biosynthesis via de novo pathway; (S)-dihydroorotate from bicarbonate: step 2/3. Catalyzes the condensation of carbamoyl phosphate and aspartate to form carbamoyl aspartate and inorganic phosphate, the committed step in the de novo pyrimidine nucleotide biosynthesis pathway. This is Aspartate carbamoyltransferase catalytic subunit from Mycobacterium tuberculosis (strain ATCC 25177 / H37Ra).